The chain runs to 189 residues: Selenoprotein S (189 aa).

The helical transmembrane segment at 29–49 threads the bilayer; it reads VVLSSYGWYILLGCILIYLLI. Residues 114 to 125 are compositionally biased toward basic and acidic residues; it reads IETWDRMKEGKS. A disordered region spans residues 114-189; the sequence is IETWDRMKEG…RRGPSSGGUG (76 aa). The span at 136–147 shows a compositional bias: low complexity; that stretch reads PSPSTSTSAATK. Positions 148–157 are enriched in basic and acidic residues; sequence PKQEKQERKT. Residue selenocysteine 188 is a non-standard amino acid, selenocysteine.

The protein belongs to the selenoprotein S family.

The protein resides in the endoplasmic reticulum membrane. It is found in the cytoplasm. In terms of biological role, involved in the degradation process of misfolded endoplasmic reticulum (ER) luminal proteins. Participates in the transfer of misfolded proteins from the ER to the cytosol, where they are destroyed by the proteasome in a ubiquitin-dependent manner. The protein is Selenoprotein S (vimp) of Xenopus tropicalis (Western clawed frog).